Here is a 229-residue protein sequence, read N- to C-terminus: Cytidylate kinase (229 aa).

12-20 (GPSGAGKGT) is an ATP binding site.

This sequence belongs to the cytidylate kinase family. Type 1 subfamily.

It is found in the cytoplasm. The enzyme catalyses CMP + ATP = CDP + ADP. It catalyses the reaction dCMP + ATP = dCDP + ADP. In Pseudomonas aeruginosa (strain UCBPP-PA14), this protein is Cytidylate kinase.